A 269-amino-acid polypeptide reads, in one-letter code: MATH domain and coiled-coil domain-containing protein At2g01790 (269 aa).

An MATH domain is found at 6-134; it reads AVKKLWVINN…NGEVDIVAEV (129 aa). Positions 228–269 form a coiled coil; that stretch reads KLDWLEKKLKETGKSRLQEIEEDLKDLKVKCADMDALLEFLR.

The protein is MATH domain and coiled-coil domain-containing protein At2g01790 of Arabidopsis thaliana (Mouse-ear cress).